We begin with the raw amino-acid sequence, 442 residues long: uncharacterized protein (442 aa).

4 residues coordinate [4Fe-4S] cluster: Cys-43, Cys-49, Cys-52, and Cys-130. S-adenosyl-L-methionine contacts are provided by Gln-273, Tyr-302, Glu-323, and Asp-372. Cys-399 serves as the catalytic Nucleophile.

Belongs to the class I-like SAM-binding methyltransferase superfamily. RNA M5U methyltransferase family.

This is an uncharacterized protein from Protochlamydia amoebophila (strain UWE25).